Reading from the N-terminus, the 413-residue chain is Lamin tail domain-containing protein 1 (413 aa).

2 disordered regions span residues methionine 1–glycine 25 and histidine 102–aspartate 128. Polar residues predominate over residues leucine 107–aspartate 128. The 119-residue stretch at glutamate 169–histidine 287 folds into the LTD domain. The segment at leucine 356–serine 413 is disordered. A compositionally biased stretch (low complexity) spans serine 385 to glutamine 396.

Belongs to the intermediate filament family.

The polypeptide is Lamin tail domain-containing protein 1 (Lmntd1) (Mus musculus (Mouse)).